The sequence spans 209 residues: Uridine kinase (209 aa).

12–19 serves as a coordination point for ATP; that stretch reads GGSGSGKT.

It belongs to the uridine kinase family.

The protein localises to the cytoplasm. It carries out the reaction uridine + ATP = UMP + ADP + H(+). It catalyses the reaction cytidine + ATP = CMP + ADP + H(+). It participates in pyrimidine metabolism; CTP biosynthesis via salvage pathway; CTP from cytidine: step 1/3. The protein operates within pyrimidine metabolism; UMP biosynthesis via salvage pathway; UMP from uridine: step 1/1. This chain is Uridine kinase, found in Listeria innocua serovar 6a (strain ATCC BAA-680 / CLIP 11262).